Here is a 173-residue protein sequence, read N- to C-terminus: Shikimate kinase (173 aa).

14-19 (GAGKST) provides a ligand contact to ATP. Position 18 (Ser-18) interacts with Mg(2+). Substrate-binding residues include Asp-36, Arg-60, and Gly-82. Arg-120 is a binding site for ATP. Substrate is bound at residue Arg-140. Gln-157 provides a ligand contact to ATP.

Belongs to the shikimate kinase family. As to quaternary structure, monomer. Requires Mg(2+) as cofactor.

It localises to the cytoplasm. The enzyme catalyses shikimate + ATP = 3-phosphoshikimate + ADP + H(+). The protein operates within metabolic intermediate biosynthesis; chorismate biosynthesis; chorismate from D-erythrose 4-phosphate and phosphoenolpyruvate: step 5/7. Catalyzes the specific phosphorylation of the 3-hydroxyl group of shikimic acid using ATP as a cosubstrate. This is Shikimate kinase from Buchnera aphidicola subsp. Schizaphis graminum (strain Sg).